We begin with the raw amino-acid sequence, 275 residues long: Phosphite import ATP-binding protein PxtA (275 aa).

The 242-residue stretch at 11–252 (LRVDRLSVVY…QLERIYAGRS (242 aa)) folds into the ABC transporter domain. Position 44–51 (44–51 (GLSGAGKS)) interacts with ATP. The disordered stretch occupies residues 251–275 (RSTTQPANAPAEPPVMLEPSLEMSR).

This sequence belongs to the ABC transporter superfamily. Phosphonates importer (TC 3.A.1.9.1) family. In terms of assembly, the complex is composed of two ATP-binding proteins (PtxA), two transmembrane proteins (PtxC) and a solute-binding protein (PtxB).

The protein localises to the cell inner membrane. It catalyses the reaction phosphite(out) + ATP + H2O = phosphite(in) + ADP + phosphate + H(+). Its function is as follows. Part of the ABC transporter complex PtxABC involved in phosphite import. Responsible for energy coupling to the transport system. In Stutzerimonas stutzeri (Pseudomonas stutzeri), this protein is Phosphite import ATP-binding protein PxtA (ptxA).